A 368-amino-acid polypeptide reads, in one-letter code: F-box protein At3g17710 (368 aa).

The F-box domain occupies 1–46; sequence MASVKLPWDLEEEILSRLPPRSLVRFRTVCKHWNGLFSDKRFVKKH.

The chain is F-box protein At3g17710 from Arabidopsis thaliana (Mouse-ear cress).